Here is a 105-residue protein sequence, read N- to C-terminus: Hydrogen cyanide synthase subunit HcnA (105 aa).

The 2Fe-2S ferredoxin-type domain maps to 16–97 (ADMTISLNGQ…GMQVQTLSNR (82 aa)). Residues Cys-60, Cys-65, Cys-68, and Cys-81 each contribute to the [2Fe-2S] cluster site.

As to quaternary structure, heterotrimer of HcnA, HcnB and HcnC.

Its subcellular location is the cell membrane. It catalyses the reaction glycine + 2 A = hydrogen cyanide + 2 AH2 + CO2. In terms of biological role, a three-component membrane-bound flavoenzyme that catalyzes the formation of hydrogen cyanide, a secondary metabolite, by transfer of electrons to a cyanide-resistant branch of the aerobic respiratory chain. Contributes to suppression of black root rot of tobacco. This chain is Hydrogen cyanide synthase subunit HcnA, found in Pseudomonas protegens (strain DSM 19095 / LMG 27888 / CFBP 6595 / CHA0).